The sequence spans 218 residues: Small ribosomal subunit protein uS3c (218 aa).

The 72-residue stretch at 47-118 folds into the KH type-2 domain; the sequence is VQKNLKISSG…KLNITITRIA (72 aa).

This sequence belongs to the universal ribosomal protein uS3 family. In terms of assembly, part of the 30S ribosomal subunit.

The protein resides in the plastid. The protein localises to the chloroplast. The protein is Small ribosomal subunit protein uS3c (rps3) of Daucus carota (Wild carrot).